The chain runs to 160 residues: Large ribosomal subunit protein uL15 (160 aa).

Residues 1–13 show a composition bias toward basic and acidic residues; that stretch reads MKLNELRDNEGAA. A disordered region spans residues 1–51; that stretch reads MKLNELRDNEGAARKKKRVARGPGSGKGKTAGRGIKGQKSRSGVALNGYEG. The span at 23–35 shows a compositional bias: gly residues; the sequence is PGSGKGKTAGRGI.

The protein belongs to the universal ribosomal protein uL15 family. As to quaternary structure, part of the 50S ribosomal subunit.

Functionally, binds to the 23S rRNA. The protein is Large ribosomal subunit protein uL15 of Cereibacter sphaeroides (strain ATCC 17025 / ATH 2.4.3) (Rhodobacter sphaeroides).